Reading from the N-terminus, the 298-residue chain is uncharacterized protein (298 aa).

Positions 5 to 62 (TSLSAMRIFEAAARLGSFRAAAEELNLSPSAVSHAIMRLERDLGVALFERTTRSVSLT) constitute an HTH lysR-type domain. A DNA-binding region (H-T-H motif) is located at residues 22-42 (FRAAAEELNLSPSAVSHAIMR).

It belongs to the LysR transcriptional regulatory family.

This is an uncharacterized protein from Sinorhizobium fredii (strain NBRC 101917 / NGR234).